The primary structure comprises 2259 residues: Golgin subfamily A member 4 (2259 aa).

The tract at residues 1–54 is disordered; it reads MFKKLKQKISEEQQQLQQALAPAQASSSSSTPTRTRSRTSSFTDQLDDATPNRE. Position 10 is a phosphoserine (Ser10). A compositionally biased stretch (low complexity) spans 12 to 41; sequence EQQQLQQALAPAQASSSSSTPTRTRSRTSS. Thr39 is subject to Phosphothreonine. Ser41, Ser104, and Ser111 each carry phosphoserine. Residues 165–235 form an interaction with MACF1 region; it reads SLSREQLLQR…EELQMDQQAK (71 aa). Residues 167–2182 are a coiled coil; that stretch reads SREQLLQRLR…SYEKSVCAAA (2016 aa). Basic and acidic residues-rich tracts occupy residues 1932–1946 and 1954–1977; these read LEDR…HVIE and DGRH…LSKE. The tract at residues 1932–1977 is disordered; the sequence is LEDRPEENSKSHVIESKLGTPMDGRHSDLESKLAGSEREKQKLSKE. Positions 2199 to 2246 constitute a GRIP domain; that stretch reads LFGEPTEFEYLRKVLFEYMMGRETKTMAKVITTVLRFPDDQAQKILER.

Homodimer. Interacts with GTP-bound ARL1 and ARL3. Interacts with MACF1. Directly interacts with TBC1D23. Interacts with FAM91A1; this interaction may be mediated by TBC1D23. In terms of tissue distribution, expressed in the head of epididymal sperm but not in testicular sperm (at protein level).

It localises to the cytoplasm. It is found in the golgi apparatus membrane. The protein localises to the golgi apparatus. The protein resides in the trans-Golgi network membrane. Involved in vesicular trafficking at the Golgi apparatus level. May play a role in delivery of transport vesicles containing GPI-linked proteins from the trans-Golgi network through its interaction with MACF1. Involved in endosome-to-Golgi trafficking. In Rattus norvegicus (Rat), this protein is Golgin subfamily A member 4.